The chain runs to 136 residues: MGKPMQVSRYWRHFREKYRLIGGKCENGHLLFPKRPICPICGSRNIEEFQFSGKGKVITWTIVRNPPSGFEYYKPYPLALVQLEEGPVVLAQLTDVEPEEIKEGMEVEMVTRKIREFDEDGLILYGYKFRPIIKSE.

Positions 25, 38, and 41 each coordinate Zn(2+).

Belongs to the scaffold protein DUF35 family. In terms of assembly, interacts with acetoacetyl-CoA thiolase and HMG-CoA synthase (HMGCS) that catalyzes the first and second step in the mevalonate pathway, respectively.

Its function is as follows. Functions as a scaffold to connect the acetoacetyl-CoA thiolase and HMG-CoA synthase (HMGCS) dimers in the channeling thiolase/HMGCS complex, which allows for efficient coupling of the endergonic thiolase reaction with the exergonic HMGCS reaction. The sequence is that of DUF35 domain-containing scaffold protein from Pyrococcus furiosus (strain ATCC 43587 / DSM 3638 / JCM 8422 / Vc1).